Consider the following 631-residue polypeptide: 1-deoxy-D-xylulose-5-phosphate synthase (631 aa).

Thiamine diphosphate-binding positions include His87 and 128–130 (GHS). Asp159 provides a ligand contact to Mg(2+). Thiamine diphosphate-binding positions include 160 to 161 (GA), Asn188, Phe295, and Glu377. Asn188 lines the Mg(2+) pocket.

It belongs to the transketolase family. DXPS subfamily. Homodimer. Mg(2+) is required as a cofactor. Thiamine diphosphate serves as cofactor.

It catalyses the reaction D-glyceraldehyde 3-phosphate + pyruvate + H(+) = 1-deoxy-D-xylulose 5-phosphate + CO2. Its pathway is metabolic intermediate biosynthesis; 1-deoxy-D-xylulose 5-phosphate biosynthesis; 1-deoxy-D-xylulose 5-phosphate from D-glyceraldehyde 3-phosphate and pyruvate: step 1/1. Catalyzes the acyloin condensation reaction between C atoms 2 and 3 of pyruvate and glyceraldehyde 3-phosphate to yield 1-deoxy-D-xylulose-5-phosphate (DXP). This chain is 1-deoxy-D-xylulose-5-phosphate synthase, found in Pseudomonas putida (strain ATCC 700007 / DSM 6899 / JCM 31910 / BCRC 17059 / LMG 24140 / F1).